Here is a 497-residue protein sequence, read N- to C-terminus: Putative BTB/POZ domain-containing protein R738 (497 aa).

Positions 16–86 (SDCKLVLDDG…FYEKSNVINA (71 aa)) constitute a BTB domain.

It belongs to the mimivirus BTB/WD family.

The protein is Putative BTB/POZ domain-containing protein R738 of Acanthamoeba polyphaga (Amoeba).